A 347-amino-acid chain; its full sequence is Quinolinate synthase (347 aa).

Iminosuccinate-binding residues include H47 and S68. A [4Fe-4S] cluster-binding site is contributed by C113. Iminosuccinate contacts are provided by residues 139 to 141 (YAN) and S156. C200 provides a ligand contact to [4Fe-4S] cluster. Residues 226–228 (HPE) and T243 contribute to the iminosuccinate site. A [4Fe-4S] cluster-binding site is contributed by C297.

This sequence belongs to the quinolinate synthase family. Type 1 subfamily. Requires [4Fe-4S] cluster as cofactor.

The protein resides in the cytoplasm. It catalyses the reaction iminosuccinate + dihydroxyacetone phosphate = quinolinate + phosphate + 2 H2O + H(+). It functions in the pathway cofactor biosynthesis; NAD(+) biosynthesis; quinolinate from iminoaspartate: step 1/1. Functionally, catalyzes the condensation of iminoaspartate with dihydroxyacetone phosphate to form quinolinate. The protein is Quinolinate synthase of Salmonella agona (strain SL483).